Here is a 569-residue protein sequence, read N- to C-terminus: Proline--tRNA ligase (569 aa).

Belongs to the class-II aminoacyl-tRNA synthetase family. ProS type 1 subfamily. As to quaternary structure, homodimer.

The protein resides in the cytoplasm. The enzyme catalyses tRNA(Pro) + L-proline + ATP = L-prolyl-tRNA(Pro) + AMP + diphosphate. Catalyzes the attachment of proline to tRNA(Pro) in a two-step reaction: proline is first activated by ATP to form Pro-AMP and then transferred to the acceptor end of tRNA(Pro). As ProRS can inadvertently accommodate and process non-cognate amino acids such as alanine and cysteine, to avoid such errors it has two additional distinct editing activities against alanine. One activity is designated as 'pretransfer' editing and involves the tRNA(Pro)-independent hydrolysis of activated Ala-AMP. The other activity is designated 'posttransfer' editing and involves deacylation of mischarged Ala-tRNA(Pro). The misacylated Cys-tRNA(Pro) is not edited by ProRS. In Dehalococcoides mccartyi (strain ATCC BAA-2100 / JCM 16839 / KCTC 5957 / BAV1), this protein is Proline--tRNA ligase.